Consider the following 135-residue polypeptide: Small ribosomal subunit protein uS12 (135 aa).

Residues 1 to 24 (MPTINQLVRKGRHSKTTKSKSPAL) form a disordered region. Basic residues predominate over residues 9-18 (RKGRHSKTTK). Position 102 is a 3-methylthioaspartic acid (aspartate 102).

The protein belongs to the universal ribosomal protein uS12 family. In terms of assembly, part of the 30S ribosomal subunit. Contacts proteins S8 and S17. May interact with IF1 in the 30S initiation complex.

With S4 and S5 plays an important role in translational accuracy. Its function is as follows. Interacts with and stabilizes bases of the 16S rRNA that are involved in tRNA selection in the A site and with the mRNA backbone. Located at the interface of the 30S and 50S subunits, it traverses the body of the 30S subunit contacting proteins on the other side and probably holding the rRNA structure together. The combined cluster of proteins S8, S12 and S17 appears to hold together the shoulder and platform of the 30S subunit. This is Small ribosomal subunit protein uS12 from Lactobacillus delbrueckii subsp. bulgaricus (strain ATCC 11842 / DSM 20081 / BCRC 10696 / JCM 1002 / NBRC 13953 / NCIMB 11778 / NCTC 12712 / WDCM 00102 / Lb 14).